Here is a 173-residue protein sequence, read N- to C-terminus: Small ribosomal subunit protein uS5 (173 aa).

One can recognise an S5 DRBM domain in the interval 17–80; that stretch reads WQERVIQIRR…ADGKKQLIEV (64 aa).

This sequence belongs to the universal ribosomal protein uS5 family. In terms of assembly, part of the 30S ribosomal subunit. Contacts proteins S4 and S8.

In terms of biological role, with S4 and S12 plays an important role in translational accuracy. Located at the back of the 30S subunit body where it stabilizes the conformation of the head with respect to the body. The polypeptide is Small ribosomal subunit protein uS5 (Gloeothece citriformis (strain PCC 7424) (Cyanothece sp. (strain PCC 7424))).